The primary structure comprises 478 residues: Kynureninase (478 aa).

Pyridoxal 5'-phosphate is bound by residues Leu-150, Thr-151, 178 to 181 (FPSD), Ser-234, Asp-263, His-266, and Tyr-288. Lys-289 is modified (N6-(pyridoxal phosphate)lysine). Positions 318 and 346 each coordinate pyridoxal 5'-phosphate.

It belongs to the kynureninase family. Homodimer. Requires pyridoxal 5'-phosphate as cofactor.

The protein localises to the cytoplasm. It catalyses the reaction L-kynurenine + H2O = anthranilate + L-alanine + H(+). The enzyme catalyses 3-hydroxy-L-kynurenine + H2O = 3-hydroxyanthranilate + L-alanine + H(+). Its pathway is amino-acid degradation; L-kynurenine degradation; L-alanine and anthranilate from L-kynurenine: step 1/1. The protein operates within cofactor biosynthesis; NAD(+) biosynthesis; quinolinate from L-kynurenine: step 2/3. Functionally, catalyzes the cleavage of L-kynurenine (L-Kyn) and L-3-hydroxykynurenine (L-3OHKyn) into anthranilic acid (AA) and 3-hydroxyanthranilic acid (3-OHAA), respectively. The sequence is that of Kynureninase from Caenorhabditis elegans.